The following is a 281-amino-acid chain: Tetraspanin-33 (281 aa).

Residues 1 to 23 (MGNAKRATQNDEDYTFVSPVVKY) lie on the Cytoplasmic side of the membrane. Residues 24–44 (LLFFFNMIFWIISLVLISIGV) traverse the membrane as a helical segment. Residues 45–62 (YSRIVKHETALACLTVDP) lie on the Extracellular side of the membrane. A helical transmembrane segment spans residues 63 to 83 (ALILMVVGILMFFITFCGCVG). Topologically, residues 84 to 94 (SLRENICLLQT) are cytoplasmic. The helical transmembrane segment at 95-115 (FCIFLTIMFLLQLLAGVLGFV) threads the bilayer. Residues 116 to 233 (FSDKARGKVT…DILVNWIHSN (118 aa)) lie on the Extracellular side of the membrane. Disulfide bonds link cysteine 154-cysteine 222, cysteine 155-cysteine 187, cysteine 171-cysteine 181, and cysteine 188-cysteine 201. An N-linked (GlcNAc...) asparagine glycan is attached at asparagine 170. A helical membrane pass occupies residues 234 to 254 (LFLLGGIALGLTIPQLVGILL). Residues 255–281 (SQVLINQIQDQIKLQNYNQQHRSDPWS) lie on the Cytoplasmic side of the membrane.

The protein belongs to the tetraspanin (TM4SF) family. As to quaternary structure, homodimer; disulfide-linked.

It localises to the cell membrane. The protein resides in the cell junction. Its subcellular location is the adherens junction. It is found in the cytoplasm. Part of TspanC8 subgroup, composed of 6 members that interact with the transmembrane metalloprotease ADAM10. This interaction is required for ADAM10 exit from the endoplasmic reticulum and for enzymatic maturation and trafficking to the cell surface as well as substrate specificity. Different TspanC8/ADAM10 complexes have distinct substrates. This Danio rerio (Zebrafish) protein is Tetraspanin-33 (tspan33).